The following is a 333-amino-acid chain: Outer membrane protein assembly factor BamC (333 aa).

An N-terminal signal peptide occupies residues 1 to 18 (MKKCLFPLSVLAVIVATG). C19 carries N-palmitoyl cysteine lipidation. C19 carries the S-diacylglycerol cysteine lipid modification.

This sequence belongs to the BamC family. Part of the Bam complex.

Its subcellular location is the cell outer membrane. Functionally, part of the outer membrane protein assembly complex, which is involved in assembly and insertion of beta-barrel proteins into the outer membrane. The chain is Outer membrane protein assembly factor BamC from Actinobacillus succinogenes (strain ATCC 55618 / DSM 22257 / CCUG 43843 / 130Z).